Consider the following 56-residue polypeptide: Large ribosomal subunit protein bL33 (56 aa).

This sequence belongs to the bacterial ribosomal protein bL33 family.

The polypeptide is Large ribosomal subunit protein bL33 (Vibrio vulnificus (strain YJ016)).